Reading from the N-terminus, the 367-residue chain is Probable dual-specificity RNA methyltransferase RlmN (367 aa).

The active-site Proton acceptor is glutamate 92. The Radical SAM core domain occupies 98 to 326 (QEYGLSVCVT…YDTLKKNGIN (229 aa)). Cysteine 105 and cysteine 341 form a disulfide bridge. Residues cysteine 112, cysteine 116, and cysteine 119 each coordinate [4Fe-4S] cluster. S-adenosyl-L-methionine-binding positions include 164–165 (GE), serine 196, 219–221 (SLH), and asparagine 297. Cysteine 341 functions as the S-methylcysteine intermediate in the catalytic mechanism.

Belongs to the radical SAM superfamily. RlmN family. It depends on [4Fe-4S] cluster as a cofactor.

The protein resides in the cytoplasm. The catalysed reaction is adenosine(2503) in 23S rRNA + 2 reduced [2Fe-2S]-[ferredoxin] + 2 S-adenosyl-L-methionine = 2-methyladenosine(2503) in 23S rRNA + 5'-deoxyadenosine + L-methionine + 2 oxidized [2Fe-2S]-[ferredoxin] + S-adenosyl-L-homocysteine. It catalyses the reaction adenosine(37) in tRNA + 2 reduced [2Fe-2S]-[ferredoxin] + 2 S-adenosyl-L-methionine = 2-methyladenosine(37) in tRNA + 5'-deoxyadenosine + L-methionine + 2 oxidized [2Fe-2S]-[ferredoxin] + S-adenosyl-L-homocysteine. Its function is as follows. Specifically methylates position 2 of adenine 2503 in 23S rRNA and position 2 of adenine 37 in tRNAs. The chain is Probable dual-specificity RNA methyltransferase RlmN from Listeria monocytogenes serovar 1/2a (strain ATCC BAA-679 / EGD-e).